The chain runs to 271 residues: Pyrroline-5-carboxylate reductase (271 aa).

This sequence belongs to the pyrroline-5-carboxylate reductase family.

It localises to the cytoplasm. It catalyses the reaction L-proline + NADP(+) = (S)-1-pyrroline-5-carboxylate + NADPH + 2 H(+). The enzyme catalyses L-proline + NAD(+) = (S)-1-pyrroline-5-carboxylate + NADH + 2 H(+). It participates in amino-acid biosynthesis; L-proline biosynthesis; L-proline from L-glutamate 5-semialdehyde: step 1/1. In terms of biological role, catalyzes the reduction of 1-pyrroline-5-carboxylate (PCA) to L-proline. This chain is Pyrroline-5-carboxylate reductase, found in Haemophilus influenzae (strain ATCC 51907 / DSM 11121 / KW20 / Rd).